Consider the following 508-residue polypeptide: Glycerol kinase (508 aa).

T14 contributes to the ADP binding site. 3 residues coordinate ATP: T14, T15, and S16. Position 14 (T14) interacts with sn-glycerol 3-phosphate. An ADP-binding site is contributed by R18. Residues R84, E85, and Y136 each contribute to the sn-glycerol 3-phosphate site. R84, E85, and Y136 together coordinate glycerol. Residue H232 is modified to Phosphohistidine; by HPr. Sn-glycerol 3-phosphate is bound at residue D246. Glycerol contacts are provided by D246 and Q247. T268 and G311 together coordinate ADP. 4 residues coordinate ATP: T268, G311, Q315, and G412. Residues G412 and N416 each coordinate ADP.

The protein belongs to the FGGY kinase family. Homotetramer and homodimer (in equilibrium). Post-translationally, the phosphoenolpyruvate-dependent sugar phosphotransferase system (PTS), including enzyme I, and histidine-containing protein (HPr) are required for the phosphorylation, which leads to the activation of the enzyme.

It catalyses the reaction glycerol + ATP = sn-glycerol 3-phosphate + ADP + H(+). Its pathway is polyol metabolism; glycerol degradation via glycerol kinase pathway; sn-glycerol 3-phosphate from glycerol: step 1/1. With respect to regulation, activated by phosphorylation and inhibited by fructose 1,6-bisphosphate (FBP). Functionally, key enzyme in the regulation of glycerol uptake and metabolism. Catalyzes the phosphorylation of glycerol to yield sn-glycerol 3-phosphate. The sequence is that of Glycerol kinase from Streptococcus pyogenes serotype M4 (strain MGAS10750).